The chain runs to 163 residues: Putative 4-hydroxy-4-methyl-2-oxoglutarate aldolase (163 aa).

Residues 76 to 79 (GDML) and Arg98 contribute to the substrate site. Asp99 contacts a divalent metal cation.

It belongs to the class II aldolase/RraA-like family. As to quaternary structure, homotrimer. The cofactor is a divalent metal cation.

The enzyme catalyses 4-hydroxy-4-methyl-2-oxoglutarate = 2 pyruvate. The catalysed reaction is oxaloacetate + H(+) = pyruvate + CO2. In terms of biological role, catalyzes the aldol cleavage of 4-hydroxy-4-methyl-2-oxoglutarate (HMG) into 2 molecules of pyruvate. Also contains a secondary oxaloacetate (OAA) decarboxylase activity due to the common pyruvate enolate transition state formed following C-C bond cleavage in the retro-aldol and decarboxylation reactions. In Pseudomonas putida (strain GB-1), this protein is Putative 4-hydroxy-4-methyl-2-oxoglutarate aldolase.